The primary structure comprises 424 residues: Phosphoribosylamine--glycine ligase (424 aa).

Residues 111-312 form the ATP-grasp domain; the sequence is KAFVKECGIK…LLDLFLATAK (202 aa). Position 137-189 (137-189) interacts with ATP; it reads IQNASFPLVIKALNKNTSIVHHQEEALKILEDALKQSNEPVIIEPFLEGFELS.

It belongs to the GARS family.

It carries out the reaction 5-phospho-beta-D-ribosylamine + glycine + ATP = N(1)-(5-phospho-beta-D-ribosyl)glycinamide + ADP + phosphate + H(+). Its pathway is purine metabolism; IMP biosynthesis via de novo pathway; N(1)-(5-phospho-D-ribosyl)glycinamide from 5-phospho-alpha-D-ribose 1-diphosphate: step 2/2. The sequence is that of Phosphoribosylamine--glycine ligase (purD) from Helicobacter pylori (strain J99 / ATCC 700824) (Campylobacter pylori J99).